The following is a 144-amino-acid chain: Peptidyl-Asp metalloendopeptidase (144 aa).

His64 is a Zn(2+) binding site. The active site involves Glu65. His68 is a binding site for Zn(2+).

This sequence belongs to the peptidase M72 family. Zn(2+) serves as cofactor.

It catalyses the reaction Cleavage of Xaa-|-Asp, Xaa-|-Glu and Xaa-|-cysteic acid bonds.. Its function is as follows. Metalloprotease, specifically cleaves on the N-terminal side of aspartyl, glutamyl and cysteic acid residues. The sequence is that of Peptidyl-Asp metalloendopeptidase from Pseudomonas fragi.